We begin with the raw amino-acid sequence, 693 residues long: Sulfite reductase 1 [ferredoxin], chloroplastic (693 aa).

Residues Met-1–Thr-62 constitute a chloroplast transit peptide. Positions 502, 508, 548, and 552 each coordinate [4Fe-4S] cluster. Residue Cys-552 coordinates siroheme.

Belongs to the nitrite and sulfite reductase 4Fe-4S domain family. In terms of assembly, monomer. Interacts with ferredoxin. Requires siroheme as cofactor. [4Fe-4S] cluster is required as a cofactor. In terms of processing, phosphorylated; this phosphorylation reduces DNA-binding. In terms of tissue distribution, expressed in leaves, stems, roots and petals.

The protein resides in the plastid. Its subcellular location is the chloroplast stroma. It localises to the chloroplast nucleoid. It is found in the plastid stroma. It carries out the reaction hydrogen sulfide + 6 oxidized [2Fe-2S]-[ferredoxin] + 3 H2O = sulfite + 6 reduced [2Fe-2S]-[ferredoxin] + 7 H(+). Its function is as follows. Essential protein with sulfite reductase activity required in assimilatory sulfate reduction pathway during both primary and secondary metabolism and thus involved in development and growth. DNA-binding protein that binds to both double-stranded and single-stranded DNA without significant sequence specificity to reversibly repress the transcriptional activity of chloroplast nucleoids by promoting DNA compaction and possibly regulate DNA replication. This Nicotiana tabacum (Common tobacco) protein is Sulfite reductase 1 [ferredoxin], chloroplastic (SIR1).